We begin with the raw amino-acid sequence, 415 residues long: Serine hydroxymethyltransferase 2 (415 aa).

Residues leucine 121 and glycine 125–leucine 127 each bind (6S)-5,6,7,8-tetrahydrofolate. Lysine 229 is modified (N6-(pyridoxal phosphate)lysine).

Belongs to the SHMT family. As to quaternary structure, homodimer. Requires pyridoxal 5'-phosphate as cofactor.

It localises to the cytoplasm. It catalyses the reaction (6R)-5,10-methylene-5,6,7,8-tetrahydrofolate + glycine + H2O = (6S)-5,6,7,8-tetrahydrofolate + L-serine. It participates in one-carbon metabolism; tetrahydrofolate interconversion. The protein operates within amino-acid biosynthesis; glycine biosynthesis; glycine from L-serine: step 1/1. Functionally, catalyzes the reversible interconversion of serine and glycine with tetrahydrofolate (THF) serving as the one-carbon carrier. This reaction serves as the major source of one-carbon groups required for the biosynthesis of purines, thymidylate, methionine, and other important biomolecules. Also exhibits THF-independent aldolase activity toward beta-hydroxyamino acids, producing glycine and aldehydes, via a retro-aldol mechanism. This chain is Serine hydroxymethyltransferase 2, found in Bordetella parapertussis (strain 12822 / ATCC BAA-587 / NCTC 13253).